The following is a 271-amino-acid chain: Formamidopyrimidine-DNA glycosylase (271 aa).

The active-site Schiff-base intermediate with DNA is the Pro2. The active-site Proton donor is the Glu3. The active-site Proton donor; for beta-elimination activity is Lys58. Residues His92, Arg111, and Arg152 each coordinate DNA. The FPG-type zinc-finger motif lies at 237–271; the sequence is TVYGREGEPCKQCGRVLKHAMIGQRATVWCGSCQR. The Proton donor; for delta-elimination activity role is filled by Arg261.

This sequence belongs to the FPG family. Monomer. Zn(2+) is required as a cofactor.

It carries out the reaction Hydrolysis of DNA containing ring-opened 7-methylguanine residues, releasing 2,6-diamino-4-hydroxy-5-(N-methyl)formamidopyrimidine.. The enzyme catalyses 2'-deoxyribonucleotide-(2'-deoxyribose 5'-phosphate)-2'-deoxyribonucleotide-DNA = a 3'-end 2'-deoxyribonucleotide-(2,3-dehydro-2,3-deoxyribose 5'-phosphate)-DNA + a 5'-end 5'-phospho-2'-deoxyribonucleoside-DNA + H(+). In terms of biological role, involved in base excision repair of DNA damaged by oxidation or by mutagenic agents. Acts as a DNA glycosylase that recognizes and removes damaged bases. Has a preference for oxidized purines, such as 7,8-dihydro-8-oxoguanine (8-oxoG). Has AP (apurinic/apyrimidinic) lyase activity and introduces nicks in the DNA strand. Cleaves the DNA backbone by beta-delta elimination to generate a single-strand break at the site of the removed base with both 3'- and 5'-phosphates. The polypeptide is Formamidopyrimidine-DNA glycosylase (Xanthomonas oryzae pv. oryzae (strain MAFF 311018)).